We begin with the raw amino-acid sequence, 565 residues long: Ubiquitin carboxyl-terminal hydrolase 21 (565 aa).

Basic and acidic residues-rich tracts occupy residues 1–14 (MPQA…RTRE) and 58–70 (PPDE…DLGR). Residues 1 to 128 (MPQASEHRLG…LRPMGIALGG (128 aa)) are disordered. The span at 71–81 (GRTSGSRPRGP) shows a compositional bias: low complexity. The segment covering 104 to 116 (SRTNLTRSKSVSS) has biased composition (polar residues). The Nuclear export signal signature appears at 134-152 (ELGAALSRLALRPEPPTLR). The region spanning 212–558 (VGLRNLGNTC…EGYVLFYQLM (347 aa)) is the USP domain. Cys221 serves as the catalytic Nucleophile. The tract at residues 324–347 (APPILASGPVPSPPRRGGALHEEP) is disordered. Cys384, Cys387, Cys437, and Cys440 together coordinate Zn(2+). Catalysis depends on His518, which acts as the Proton acceptor.

The protein belongs to the peptidase C19 family. USP21 subfamily. In terms of assembly, interacts with BEND3.

It localises to the cytoplasm. The protein resides in the nucleus. The enzyme catalyses Thiol-dependent hydrolysis of ester, thioester, amide, peptide and isopeptide bonds formed by the C-terminal Gly of ubiquitin (a 76-residue protein attached to proteins as an intracellular targeting signal).. Its function is as follows. Deubiquitinates histone H2A, a specific tag for epigenetic transcriptional repression, thereby acting as a coactivator. Deubiquitination of histone H2A releaves the repression of di- and trimethylation of histone H3 at 'Lys-4', resulting in regulation of transcriptional initiation. Regulates gene expression via histone H2A deubiquitination. Deubiquitinates BAZ2A/TIP5 leading to its stabilization. Also capable of removing NEDD8 from NEDD8 conjugates but has no effect on Sentrin-1 conjugates. Also acts as a negative regulator of the ribosome quality control (RQC) by mediating deubiquitination of 40S ribosomal proteins RPS10/eS10 and RPS20/uS10, thereby antagonizing ZNF598-mediated 40S ubiquitination. The chain is Ubiquitin carboxyl-terminal hydrolase 21 (Usp21) from Rattus norvegicus (Rat).